The primary structure comprises 655 residues: Tumor necrosis factor receptor superfamily member 21 (655 aa).

A signal peptide spans 1 to 41 (MGTSASSITALASCSRIAGQVGATMVAGSLLLLGFLSTITA). The Extracellular portion of the chain corresponds to 42–349 (QPEQKTLSLT…PHKHFDINEH (308 aa)). TNFR-Cys repeat units lie at residues 50–88 (LTGTYRHVDRTTGQVLTCDKCPAGTYVSEHCTNTSLRVC), 90–131 (SCPS…DREC), 133–167 (CPPGMYQSNGTCAPHTVCPVGWGVRKKGTENEDVR), and 170–211 (QCAR…DNVC). Disulfide bonds link Cys-67–Cys-80, Cys-70–Cys-88, Cys-91–Cys-106, Cys-109–Cys-123, Cys-113–Cys-131, Cys-133–Cys-144, Cys-150–Cys-168, Cys-171–Cys-186, and Cys-192–Cys-211. Asn-82 carries N-linked (GlcNAc...) asparagine glycosylation. Disordered regions lie at residues 214–306 (HLSS…GPHH) and 318–338 (EATGEKSSTAIKAPKRGHPRQ). Residues 216–225 (SSSSTTPSSP) are compositionally biased toward low complexity. Polar residues-rich tracts occupy residues 241–262 (VPSSTYEPQGMNSTDSNSTASV) and 276–302 (PDNTSSTSGKESTNRTLPNPPQLTHQQ). N-linked (GlcNAc...) asparagine glycosylation is found at Asn-252, Asn-278, and Asn-289. A helical membrane pass occupies residues 350–370 (LPWMIVLFLLLVLVLIVVCSI). A lipid anchor (S-palmitoyl cysteine) is attached at Cys-368. The Cytoplasmic segment spans residues 371-655 (RKSSRTLKKG…SVYSHLPDLL (285 aa)). The region spanning 415 to 498 (GIDILKLVAA…DVVEKIRGLM (84 aa)) is the Death domain.

Associates with TRADD. Interacts with NGFR. Interacts with CASP8. In terms of processing, oxidized in response to reactive oxygen species (ROS), leading to endocytosis. In terms of tissue distribution, detected in brain (at protein level). Detected in corpus callosum oligodendrocytes. Detected in embryonic and adult brain.

It is found in the cell membrane. Functionally, promotes apoptosis, possibly via a pathway that involves the activation of NF-kappa-B. Can also promote apoptosis mediated by BAX and by the release of cytochrome c from the mitochondria into the cytoplasm. Trophic-factor deprivation triggers the cleavage of surface APP by beta-secretase to release sAPP-beta which is further cleaved to release an N-terminal fragment of APP (N-APP). Negatively regulates oligodendrocyte survival, maturation and myelination. Plays a role in signaling cascades triggered by stimulation of T-cell receptors, in the adaptive immune response and in the regulation of T-cell differentiation and proliferation. Negatively regulates T-cell responses and the release of cytokines such as IL4, IL5, IL10, IL13 and IFNG by Th2 cells. Negatively regulates the production of IgG, IgM and IgM in response to antigens. May inhibit the activation of JNK in response to T-cell stimulation. Also acts as a regulator of pyroptosis: recruits CASP8 in response to reactive oxygen species (ROS) and subsequent oxidation, leading to activation of GSDMC. The chain is Tumor necrosis factor receptor superfamily member 21 (Tnfrsf21) from Rattus norvegicus (Rat).